We begin with the raw amino-acid sequence, 509 residues long: MNEKQKLESGQVHPSDKKSEKDYSKYFEAVYIPPSLKDAKKRGKEAVTYHNDFKISEQFKGLGDGRKFYIRTYGCQMNEHDTEVMAGIFMALGYEATNSVDDANVILLNTCAIRENAENKVFGELGHLKALKKNNPDLILGVCGCMSQEESVVNRILKKHPFVDMIFGTHNIHRLPELLSEAYLSKEMVVEVWSKEGDVIENLPKVRNGKIKGWVNIMYGCDKFCTYCIVPYTRGKERSRRPEDIIQEVRRLASEGYKEITLLGQNVNAYGKDFEDMTYGLGDLMDELRKIDIPRIRFTTSHPRDFDDRLIEVLAKGGNLLDHIHLPVQSGSSEVLKLMARKYDRERYMELVRKIKEAMPNASLTTDIIVGFPNETDEQFEETLSLYREVEFDSAYTFIYSPREGTPAAKMKDNVPMRVKKERLQRLNALVNEISAKKMKEYEGKVVEVLVEGESKNNPDILAGYTEKSKLVNFKGPKEAIGKIVRVKIQQAKTWSLDGEMVGEAIEVK.

Residues 1–21 (MNEKQKLESGQVHPSDKKSEK) form a disordered region. One can recognise an MTTase N-terminal domain in the interval 66-184 (RKFYIRTYGC…LPELLSEAYL (119 aa)). [4Fe-4S] cluster-binding residues include Cys-75, Cys-111, Cys-145, Cys-221, Cys-225, and Cys-228. One can recognise a Radical SAM core domain in the interval 207-437 (RNGKIKGWVN…NALVNEISAK (231 aa)). The region spanning 440 to 503 (KEYEGKVVEV…TWSLDGEMVG (64 aa)) is the TRAM domain.

This sequence belongs to the methylthiotransferase family. MiaB subfamily. Monomer. [4Fe-4S] cluster serves as cofactor.

It localises to the cytoplasm. It catalyses the reaction N(6)-dimethylallyladenosine(37) in tRNA + (sulfur carrier)-SH + AH2 + 2 S-adenosyl-L-methionine = 2-methylsulfanyl-N(6)-dimethylallyladenosine(37) in tRNA + (sulfur carrier)-H + 5'-deoxyadenosine + L-methionine + A + S-adenosyl-L-homocysteine + 2 H(+). It carries out the reaction N(6)-dimethylallyladenosine(37) in tRNA + (sulfur carrier)-SH + AH2 + S-adenosyl-L-methionine = 2-thio-N(6)-dimethylallyladenosine(37) in tRNA + (sulfur carrier)-H + 5'-deoxyadenosine + L-methionine + A + H(+). The enzyme catalyses 2-thio-N(6)-dimethylallyladenosine(37) in tRNA + S-adenosyl-L-methionine = 2-methylsulfanyl-N(6)-dimethylallyladenosine(37) in tRNA + S-adenosyl-L-homocysteine + H(+). Its function is as follows. Catalyzes the methylthiolation of N6-(dimethylallyl)adenosine (i(6)A), leading to the formation of 2-methylthio-N6-(dimethylallyl)adenosine (ms(2)i(6)A) at position 37 in tRNAs that read codons beginning with uridine. The protein is tRNA-2-methylthio-N(6)-dimethylallyladenosine synthase of Bacillus subtilis (strain 168).